The primary structure comprises 215 residues: 3-isopropylmalate dehydratase small subunit (215 aa).

The protein belongs to the LeuD family. LeuD type 1 subfamily. In terms of assembly, heterodimer of LeuC and LeuD.

It carries out the reaction (2R,3S)-3-isopropylmalate = (2S)-2-isopropylmalate. Its pathway is amino-acid biosynthesis; L-leucine biosynthesis; L-leucine from 3-methyl-2-oxobutanoate: step 2/4. Its function is as follows. Catalyzes the isomerization between 2-isopropylmalate and 3-isopropylmalate, via the formation of 2-isopropylmaleate. The chain is 3-isopropylmalate dehydratase small subunit from Cellvibrio japonicus (strain Ueda107) (Pseudomonas fluorescens subsp. cellulosa).